Here is a 449-residue protein sequence, read N- to C-terminus: NADH-quinone oxidoreductase subunit H (449 aa).

Helical transmembrane passes span 26–46 (FWLILLKGVAVFAFLLLMTLF), 96–116 (PIFILAPILSAVPAFLAFAVI), 136–156 (LPVSVLYMLAAASLGVYGLIL), 177–197 (IISYEVAMGLSFVAVFIYAGT), 211–231 (WYIALVPSFVLYCISMVGETN), 259–279 (FFFLAEYINMVTVSAIATTLF), 298–318 (WVPLIWFVLKLLLFLFFFIWL), 330–350 (FMAFGWKVLIPVGLLWVLVIA), and 365–385 (WLIGAGVVIGIMLIVALLDPG). The tract at residues 396–449 (AERRKLAEAPSLESIPWPPPPPGGAHHRPAVPAGTSANGSSTVIPADPPPRQES) is disordered.

Belongs to the complex I subunit 1 family. As to quaternary structure, NDH-1 is composed of 14 different subunits. Subunits NuoA, H, J, K, L, M, N constitute the membrane sector of the complex.

Its subcellular location is the cell membrane. The enzyme catalyses a quinone + NADH + 5 H(+)(in) = a quinol + NAD(+) + 4 H(+)(out). NDH-1 shuttles electrons from NADH, via FMN and iron-sulfur (Fe-S) centers, to quinones in the respiratory chain. The immediate electron acceptor for the enzyme in this species is believed to be ubiquinone. Couples the redox reaction to proton translocation (for every two electrons transferred, four hydrogen ions are translocated across the cytoplasmic membrane), and thus conserves the redox energy in a proton gradient. This subunit may bind ubiquinone. In Frankia alni (strain DSM 45986 / CECT 9034 / ACN14a), this protein is NADH-quinone oxidoreductase subunit H.